Reading from the N-terminus, the 56-residue chain is MAKRGSTLLVKLASSAGTGYFYVKKRNPKKLINKLSFRKYDPVARKHVLFTEEKLR.

Belongs to the bacterial ribosomal protein bL33 family.

This Ehrlichia ruminantium (strain Gardel) protein is Large ribosomal subunit protein bL33.